The following is a 297-amino-acid chain: CCAAT/enhancer-binding protein beta (297 aa).

The segment at 1 to 22 (MHRLLAWDAACLPPPPAAFRPM) is required for Lys-134 sumoylation. The residue at position 3 (Arg3) is an Asymmetric dimethylarginine; by CARM1. Residues 22 to 105 (MEVANFYYEP…YGAKPSKKPS (84 aa)) form a required for MYC transcriptional repression region. Residue Lys39 is modified to N6-acetyllysine; alternate. Lys39 carries the post-translational modification N6-methylated lysine; alternate. Residues Lys99 and Lys102 each carry the N6-acetyllysine; by KAT2A and KAT2B modification. Lys103 carries the N6-acetyllysine; by KAT2A and KAT2B; alternate modification. Residue Lys103 forms a Glycyl lysine isopeptide (Lys-Gly) (interchain with G-Cter in SUMO2); alternate linkage. Position 105 is a phosphoserine; by RPS6KA1 and PKC/PRKCA (Ser105). Lys134 participates in a covalent cross-link: Glycyl lysine isopeptide (Lys-Gly) (interchain with G-Cter in SUMO2); alternate. Lys134 is covalently cross-linked (Glycyl lysine isopeptide (Lys-Gly) (interchain with G-Cter in SUMO); alternate). Residue Lys145 forms a Glycyl lysine isopeptide (Lys-Gly) (interchain with G-Cter in SUMO2) linkage. The interval 172 to 201 (SGSSGSLSTSSSSSPPGTPSPADAKAAPAA) is disordered. Position 180 is a phosphothreonine; by GSK3-beta (Thr180). Residues Ser181 and Ser182 are each glycosylated (O-linked (GlcNAc) serine). At Ser185 the chain carries Phosphoserine; by GSK3-beta. A Phosphothreonine; by RPS6KA1, CDK2 and MAPK modification is found at Thr189. Residues Lys212 and Lys214 each participate in a glycyl lysine isopeptide (Lys-Gly) (interchain with G-Cter in SUMO2) cross-link. Residues 223–286 (SDEYKMRRER…STLRNLFKQL (64 aa)) enclose the bZIP domain. A basic motif region spans residues 227-247 (KMRRERNNIAVRKSRDKAKMR). At Ser240 the chain carries Phosphoserine; by PKC/PRKCA. Positions 249 to 256 (LETQHKVL) are leucine-zipper. Phosphoserine; by CaMK2 is present on Ser277. Lys284 is covalently cross-linked (Glycyl lysine isopeptide (Lys-Gly) (interchain with G-Cter in SUMO2)).

The protein belongs to the bZIP family. C/EBP subfamily. As to quaternary structure, binds DNA as a homodimer and as a heterodimer. Interacts with MYB; within the complex, MYB and CEBPB bind to different promoter regions. Interacts with ATF4. Binds DNA as a heterodimer with ATF4. Can form stable heterodimers with CEBPA, CEBPD, CEBPE and CEBPG. Interacts with SIX1. Isoform 2 and isoform 3 also form heterodimers. Interacts with TRIM28 and PTGES2. Interacts with PRDM16. Interacts with CCDC85B. Forms a complex with THOC5. Interacts with ZNF638; this interaction increases transcriptional activation. Interacts with CIDEA and CIDEC; these interactions increase transcriptional activation of a subset of CEBPB downstream target genes. Interacts with DDIT3/CHOP. Interacts with EP300; recruits EP300 to chromatin. Interacts with RORA; the interaction disrupts interaction with EP300. Interacts (not methylated) with MED23, MED26, SMARCA2, SMARCB1 and SMARCC1. Interacts with KAT2A and KAT2B. Interacts with ATF5; EP300 is required for ATF5 and CEBPB interaction and DNA binding. Interacts with NFE2L1; the heterodimer represses expression of DSPP during odontoblast differentiation. Phosphorylated at Thr-189 by MAPK and CDK2, serves to prime phosphorylation at Thr-180 and Ser-185 by GSK3B and acquire DNA-binding as well as transactivation activities, required to induce adipogenesis. MAPK and CDK2 act sequentially to maintain Thr-189 in the primed phosphorylated state during mitotical cloning expansion and thereby progression of terminal differentiation. Phosphorylation at Ser-105 enhances transactivation activity. Phosphorylation at Ser-277 in response to calcium increases transactivation activity. Phosphorylated at Thr-189 by RPS6KA1. Post-translationally, methylated. Methylation at Arg-3 by CARM1 and at Lys-39 by EHMT2 inhibit transactivation activity. Methylation is probably inhibited by phosphorylation at Thr-189. In terms of processing, sumoylated by polymeric chains of SUMO2 or SUMO3. Sumoylation at Lys-134 is required for inhibition of T-cells proliferation. In adipocytes, sumoylation at Lys-134 by PIAS1 leads to ubiquitination and subsequent proteasomal degradation. Desumoylated by SENP2, which abolishes ubiquitination and stabilizes protein levels. Ubiquitinated, leading to proteasomal degradation. Post-translationally, O-glycosylated, glycosylation at Ser-181 and Ser-182 prevents phosphorylation on Thr-189, Ser-185 and Thr-180 and DNA binding activity which delays the adipocyte differentiation program. In terms of processing, acetylated. Acetylation at Lys-39 is an important and dynamic regulatory event that contributes to its ability to transactivate target genes, including those associated with adipogenesis and adipocyte function. Deacetylation by HDAC1 represses its transactivation activity. Acetylated by KAT2A and KAT2B within a cluster of lysine residues between amino acids 99-103, this acetylation is strongly induced by glucocorticoid treatment and enhances transactivation activity. As to expression, liver and lung.

It is found in the nucleus. The protein localises to the cytoplasm. Its function is as follows. Important transcription factor regulating the expression of genes involved in immune and inflammatory responses. Also plays a significant role in adipogenesis, as well as in the gluconeogenic pathway, liver regeneration, and hematopoiesis. The consensus recognition site is 5'-T[TG]NNGNAA[TG]-3'. Its functional capacity is governed by protein interactions and post-translational protein modifications. During early embryogenesis, plays essential and redundant roles with CEBPA. Has a promitotic effect on many cell types such as hepatocytes and adipocytes but has an antiproliferative effect on T-cells by repressing MYC expression, facilitating differentiation along the T-helper 2 lineage. Binds to regulatory regions of several acute-phase and cytokines genes and plays a role in the regulation of acute-phase reaction and inflammation. Also plays a role in intracellular bacteria killing. During adipogenesis, is rapidly expressed and, after activation by phosphorylation, induces CEBPA and PPARG, which turn on the series of adipocyte genes that give rise to the adipocyte phenotype. The delayed transactivation of the CEBPA and PPARG genes by CEBPB appears necessary to allow mitotic clonal expansion and thereby progression of terminal differentiation. Essential for female reproduction because of a critical role in ovarian follicle development. Restricts osteoclastogenesis: together with NFE2L1; represses expression of DSPP during odontoblast differentiation. Essential for gene expression induction in activated macrophages. Plays a major role in immune responses such as CD4(+) T-cell response, granuloma formation and endotoxin shock. Not essential for intracellular bacteria killing. Functionally, acts as a dominant negative through heterodimerization with isoform 2. Promotes osteoblast differentiation and osteoclastogenesis. The chain is CCAAT/enhancer-binding protein beta from Rattus norvegicus (Rat).